Consider the following 350-residue polypeptide: Probable deoxyhypusine synthase (350 aa).

NAD(+) is bound by residues 96–100 (SNLIS), 122–124 (TAG), glutamate 128, and aspartate 229. Residue 127–128 (EE) coordinates spermidine. Residue aspartate 234 coordinates spermidine. Residue glycine 276 coordinates NAD(+). Histidine 281 lines the spermidine pocket. Residue 301-302 (SA) participates in NAD(+) binding. Spermidine contacts are provided by residues 307–309 (GSD) and 316–322 (EAVSWGK). Lysine 322 serves as the catalytic Nucleophile. Residue 335–336 (EV) coordinates NAD(+).

This sequence belongs to the deoxyhypusine synthase family. Requires NAD(+) as cofactor.

The catalysed reaction is [eIF5A protein]-L-lysine + spermidine = [eIF5A protein]-deoxyhypusine + propane-1,3-diamine. It participates in protein modification; eIF5A hypusination. Functionally, catalyzes the NAD-dependent oxidative cleavage of spermidine and the subsequent transfer of the butylamine moiety of spermidine to the epsilon-amino group of a specific lysine residue of the eIF-5A precursor protein to form the intermediate deoxyhypusine residue. The polypeptide is Probable deoxyhypusine synthase (Schizosaccharomyces pombe (strain 972 / ATCC 24843) (Fission yeast)).